Consider the following 388-residue polypeptide: MNLHEYQAKQIFAQYRLPVSKGIVCHSLDDAVSAIHTLAGDTWAAKCQVHAGGRGKAGGVKLVRSEAEIREFCHQWLGQRLVTFQTDKNGQLVNTIYLEETCLIERELYLGAVIDRSSQKIVFMASNAGGMNIEDVAAQTPELIHKATIDPLTGAQAFQGRELAFKLGLSGDQIKQFAHLFVQLAKLFIEKDLALLEVNPLVLTKQGQLLCLDAKMVIDSNALYRHPELKALQDPSQEDAREADAAKWDLNYVALDGNIGCMVNGAGLAMGTMDIVKLHGGRPANFLDVGGGATKERVSEAFKLILSDQNVKAVLVNIFGGIVRCDLIAEGIIAAVNEVGINIPVIVRLEGTNAELGREILANSGLRLIAANTLTQAAQLAVKAAEGK.

Residues K46, 53-55 (GRG), E99, C102, and E107 contribute to the ATP site. Positions 199 and 213 each coordinate Mg(2+). Residues N264 and 321–323 (GIV) contribute to the substrate site.

This sequence belongs to the succinate/malate CoA ligase beta subunit family. As to quaternary structure, heterotetramer of two alpha and two beta subunits. Requires Mg(2+) as cofactor.

It carries out the reaction succinate + ATP + CoA = succinyl-CoA + ADP + phosphate. The catalysed reaction is GTP + succinate + CoA = succinyl-CoA + GDP + phosphate. It functions in the pathway carbohydrate metabolism; tricarboxylic acid cycle; succinate from succinyl-CoA (ligase route): step 1/1. Succinyl-CoA synthetase functions in the citric acid cycle (TCA), coupling the hydrolysis of succinyl-CoA to the synthesis of either ATP or GTP and thus represents the only step of substrate-level phosphorylation in the TCA. The beta subunit provides nucleotide specificity of the enzyme and binds the substrate succinate, while the binding sites for coenzyme A and phosphate are found in the alpha subunit. The sequence is that of Succinate--CoA ligase [ADP-forming] subunit beta from Actinobacillus pleuropneumoniae serotype 3 (strain JL03).